Here is a 93-residue protein sequence, read N- to C-terminus: Putative pterin-4-alpha-carbinolamine dehydratase (93 aa).

Belongs to the pterin-4-alpha-carbinolamine dehydratase family.

It carries out the reaction (4aS,6R)-4a-hydroxy-L-erythro-5,6,7,8-tetrahydrobiopterin = (6R)-L-erythro-6,7-dihydrobiopterin + H2O. This chain is Putative pterin-4-alpha-carbinolamine dehydratase, found in Mycolicibacterium vanbaalenii (strain DSM 7251 / JCM 13017 / BCRC 16820 / KCTC 9966 / NRRL B-24157 / PYR-1) (Mycobacterium vanbaalenii).